A 255-amino-acid polypeptide reads, in one-letter code: Proteasome subunit alpha (255 aa).

Residues 190–201 (PSTSGASGNGET) are compositionally biased toward polar residues. The disordered stretch occupies residues 190–255 (PSTSGASGNG…DKSSGDGEQN (66 aa)). Positions 202 to 217 (EPSKLEVAILDRERPG) are enriched in basic and acidic residues.

This sequence belongs to the peptidase T1A family. As to quaternary structure, the 20S proteasome core is composed of 14 alpha and 14 beta subunits that assemble into four stacked heptameric rings, resulting in a barrel-shaped structure. The two inner rings, each composed of seven catalytic beta subunits, are sandwiched by two outer rings, each composed of seven alpha subunits. The catalytic chamber with the active sites is on the inside of the barrel. Has a gated structure, the ends of the cylinder being occluded by the N-termini of the alpha-subunits. Is capped by the proteasome-associated ATPase, ARC.

It is found in the cytoplasm. It participates in protein degradation; proteasomal Pup-dependent pathway. Its activity is regulated as follows. The formation of the proteasomal ATPase ARC-20S proteasome complex, likely via the docking of the C-termini of ARC into the intersubunit pockets in the alpha-rings, may trigger opening of the gate for substrate entry. Interconversion between the open-gate and close-gate conformations leads to a dynamic regulation of the 20S proteasome proteolysis activity. Functionally, component of the proteasome core, a large protease complex with broad specificity involved in protein degradation. The chain is Proteasome subunit alpha from Saccharomonospora viridis (strain ATCC 15386 / DSM 43017 / JCM 3036 / CCUG 5913 / NBRC 12207 / NCIMB 9602 / P101) (Thermoactinomyces viridis).